A 342-amino-acid chain; its full sequence is N-acetyl-gamma-glutamyl-phosphate reductase (342 aa).

Cys146 is a catalytic residue.

It belongs to the NAGSA dehydrogenase family. Type 1 subfamily.

It is found in the cytoplasm. It carries out the reaction N-acetyl-L-glutamate 5-semialdehyde + phosphate + NADP(+) = N-acetyl-L-glutamyl 5-phosphate + NADPH + H(+). It functions in the pathway amino-acid biosynthesis; L-arginine biosynthesis; N(2)-acetyl-L-ornithine from L-glutamate: step 3/4. In terms of biological role, catalyzes the NADPH-dependent reduction of N-acetyl-5-glutamyl phosphate to yield N-acetyl-L-glutamate 5-semialdehyde. The chain is N-acetyl-gamma-glutamyl-phosphate reductase from Streptomyces avermitilis (strain ATCC 31267 / DSM 46492 / JCM 5070 / NBRC 14893 / NCIMB 12804 / NRRL 8165 / MA-4680).